We begin with the raw amino-acid sequence, 185 residues long: Adenine phosphoribosyltransferase (185 aa).

Belongs to the purine/pyrimidine phosphoribosyltransferase family. As to quaternary structure, homodimer.

It is found in the cytoplasm. It catalyses the reaction AMP + diphosphate = 5-phospho-alpha-D-ribose 1-diphosphate + adenine. It functions in the pathway purine metabolism; AMP biosynthesis via salvage pathway; AMP from adenine: step 1/1. Functionally, catalyzes a salvage reaction resulting in the formation of AMP, that is energically less costly than de novo synthesis. This Nocardioides sp. (strain ATCC BAA-499 / JS614) protein is Adenine phosphoribosyltransferase.